The primary structure comprises 660 residues: Bifunctional polymyxin resistance protein ArnA (660 aa).

Positions Met-1–Leu-304 are formyltransferase ArnAFT. His-86–Ile-88 contributes to the (6R)-10-formyltetrahydrofolate binding site. His-104 acts as the Proton donor; for formyltransferase activity in catalysis. Residues Arg-114 and Val-136–Asp-140 each bind (6R)-10-formyltetrahydrofolate. The tract at residues Arg-314–Ser-660 is dehydrogenase ArnADH. NAD(+)-binding positions include Asp-347 and Asp-368 to Ile-369. UDP-alpha-D-glucuronate-binding positions include Ala-393, Tyr-398, and Thr-432–Ser-433. Glu-434 acts as the Proton acceptor; for decarboxylase activity in catalysis. Residues Arg-460, Asn-492, Lys-526 to Arg-535, and Tyr-613 each bind UDP-alpha-D-glucuronate. The Proton donor; for decarboxylase activity role is filled by Arg-619.

In the N-terminal section; belongs to the Fmt family. UDP-L-Ara4N formyltransferase subfamily. This sequence in the C-terminal section; belongs to the NAD(P)-dependent epimerase/dehydratase family. UDP-glucuronic acid decarboxylase subfamily. Homohexamer, formed by a dimer of trimers.

The enzyme catalyses UDP-alpha-D-glucuronate + NAD(+) = UDP-beta-L-threo-pentopyranos-4-ulose + CO2 + NADH. It carries out the reaction UDP-4-amino-4-deoxy-beta-L-arabinose + (6R)-10-formyltetrahydrofolate = UDP-4-deoxy-4-formamido-beta-L-arabinose + (6S)-5,6,7,8-tetrahydrofolate + H(+). It participates in nucleotide-sugar biosynthesis; UDP-4-deoxy-4-formamido-beta-L-arabinose biosynthesis; UDP-4-deoxy-4-formamido-beta-L-arabinose from UDP-alpha-D-glucuronate: step 1/3. It functions in the pathway nucleotide-sugar biosynthesis; UDP-4-deoxy-4-formamido-beta-L-arabinose biosynthesis; UDP-4-deoxy-4-formamido-beta-L-arabinose from UDP-alpha-D-glucuronate: step 3/3. Its pathway is bacterial outer membrane biogenesis; lipopolysaccharide biosynthesis. In terms of biological role, bifunctional enzyme that catalyzes the oxidative decarboxylation of UDP-glucuronic acid (UDP-GlcUA) to UDP-4-keto-arabinose (UDP-Ara4O) and the addition of a formyl group to UDP-4-amino-4-deoxy-L-arabinose (UDP-L-Ara4N) to form UDP-L-4-formamido-arabinose (UDP-L-Ara4FN). The modified arabinose is attached to lipid A and is required for resistance to polymyxin and cationic antimicrobial peptides. The chain is Bifunctional polymyxin resistance protein ArnA from Shigella dysenteriae serotype 1 (strain Sd197).